The primary structure comprises 160 residues: Large ribosomal subunit protein bL19 (160 aa).

Composition is skewed to basic and acidic residues over residues 1 to 15 (MTEDLKNTSPSKEES) and 28 to 39 (ATRETKPKDSPS). The tract at residues 1 to 44 (MTEDLKNTSPSKEESNEIEESSKATPKATRETKPKDSPSKTKLS) is disordered.

Belongs to the bacterial ribosomal protein bL19 family.

In terms of biological role, this protein is located at the 30S-50S ribosomal subunit interface and may play a role in the structure and function of the aminoacyl-tRNA binding site. The chain is Large ribosomal subunit protein bL19 from Prochlorococcus marinus (strain SARG / CCMP1375 / SS120).